We begin with the raw amino-acid sequence, 62 residues long: Prokaryotic ubiquitin-like protein Pup (62 aa).

The disordered stretch occupies residues M1–D36. The interval D18–Y56 is ARC ATPase binding. Residue Q62 is modified to Deamidated glutamine. Q62 is covalently cross-linked (Isoglutamyl lysine isopeptide (Gln-Lys) (interchain with K-? in acceptor proteins)).

It belongs to the prokaryotic ubiquitin-like protein family. In terms of assembly, strongly interacts with the proteasome-associated ATPase ARC through a hydrophobic interface; the interacting region of Pup lies in its C-terminal half. There is one Pup binding site per ARC hexamer ring. Post-translationally, is modified by deamidation of its C-terminal glutamine to glutamate by the deamidase Dop, a prerequisite to the subsequent pupylation process.

Its pathway is protein degradation; proteasomal Pup-dependent pathway. Functionally, protein modifier that is covalently attached to lysine residues of substrate proteins, thereby targeting them for proteasomal degradation. The tagging system is termed pupylation. The protein is Prokaryotic ubiquitin-like protein Pup of Corynebacterium kroppenstedtii (strain DSM 44385 / JCM 11950 / CIP 105744 / CCUG 35717).